Consider the following 245-residue polypeptide: Biosynthetic peptidoglycan transglycosylase (245 aa).

The chain crosses the membrane as a helical span at residues 20–42 (VYAGSVFAGAWLATQLFYLAQIA).

It belongs to the glycosyltransferase 51 family.

Its subcellular location is the cell inner membrane. It carries out the reaction [GlcNAc-(1-&gt;4)-Mur2Ac(oyl-L-Ala-gamma-D-Glu-L-Lys-D-Ala-D-Ala)](n)-di-trans,octa-cis-undecaprenyl diphosphate + beta-D-GlcNAc-(1-&gt;4)-Mur2Ac(oyl-L-Ala-gamma-D-Glu-L-Lys-D-Ala-D-Ala)-di-trans,octa-cis-undecaprenyl diphosphate = [GlcNAc-(1-&gt;4)-Mur2Ac(oyl-L-Ala-gamma-D-Glu-L-Lys-D-Ala-D-Ala)](n+1)-di-trans,octa-cis-undecaprenyl diphosphate + di-trans,octa-cis-undecaprenyl diphosphate + H(+). Its pathway is cell wall biogenesis; peptidoglycan biosynthesis. In terms of biological role, peptidoglycan polymerase that catalyzes glycan chain elongation from lipid-linked precursors. In Burkholderia orbicola (strain MC0-3), this protein is Biosynthetic peptidoglycan transglycosylase.